A 72-amino-acid chain; its full sequence is Large ribosomal subunit protein bL31 (72 aa).

4 residues coordinate Zn(2+): C16, C18, C37, and C40.

It belongs to the bacterial ribosomal protein bL31 family. Type A subfamily. As to quaternary structure, part of the 50S ribosomal subunit. It depends on Zn(2+) as a cofactor.

In terms of biological role, binds the 23S rRNA. The protein is Large ribosomal subunit protein bL31 of Buchnera aphidicola subsp. Acyrthosiphon pisum (strain Tuc7).